Consider the following 461-residue polypeptide: Decaprenylphosphoryl-beta-D-ribose oxidase (461 aa).

The FAD-binding PCMH-type domain occupies 19-194 (TAPSVANVLR…MRATIEMTPT (176 aa)). FAD is bound by residues 53–63 (ARGLGRSYGDN), glycine 117, 122–125 (TVGG), 129–132 (CDIH), isoleucine 184, and tyrosine 415.

The protein belongs to the DprE1 family. In terms of assembly, monomer. Although forming apparent dimer in crystals, DprE1 does not dimerize appreciably in solution. Interacts with DprE2 to form an epimerase complex.

It localises to the periplasm. It catalyses the reaction trans,octa-cis-decaprenylphospho-beta-D-ribofuranose + FAD + H(+) = trans,octa-cis-decaprenylphospho-beta-D-erythro-pentofuranosid-2-ulose + FADH2. It participates in cell wall biogenesis; cell wall polysaccharide biosynthesis. With respect to regulation, is inhibited by 8-nitro-benzothiazinones (BTZs) such as BTZ043 and PBTZ169; BTZs are a new class of antimycobacterial agents that kill M.tuberculosis in vitro, ex vivo, and in mouse models of tuberculosis. Is also inhibited by dinitrobenzamide derivatives (DNBs), which thus block formation of both cell-wall lipoarabinomannan and arabinogalactan via inhibition of decaprenyl-phospho-arabinose (DPA) synthesis; DNBs show high activity against intracellular growth of M.tuberculosis inside macrophages, including extensively drug resistant (XDR) strains. BTZs and DNBs are suicide inhibitors that act via covalent modification of DprE1; the essential nitro group of these compounds is reduced by DprE1 to a nitroso group, which then specifically reacts with Cys-387 of DprE1 to form an irreversible semimercaptal adduct. Many other compounds with diverse scaffolds were found to act as either covalent (e.g. nitroquinoxalines, nitroimidazoles) or non-covalent (e.g. the benzothiazole derivative TCA1, the 2-carboxyquinoxaline Ty38C, 8-pyrrole-benzothiazinones, 1,4-azaindoles, pyrazolopyridones, 4-aminoquinolone piperidine amides) DprE1 inhibitors. In terms of biological role, component of the DprE1-DprE2 complex that catalyzes the 2-step epimerization of decaprenyl-phospho-ribose (DPR) to decaprenyl-phospho-arabinose (DPA), a key precursor that serves as the arabinose donor required for the synthesis of cell-wall arabinans. DprE1 catalyzes the first step of epimerization, namely FAD-dependent oxidation of the C2' hydroxyl of DPR to yield the keto intermediate decaprenyl-phospho-2'-keto-D-arabinose (DPX). The intermediate DPX is then transferred to DprE2 subunit of the epimerase complex, most probably through a 'substrate channel' at the interface of DprE1-DprE2 complex. Can also use farnesyl-phosphoryl-beta-D-ribofuranose (FPR) as substrate in vitro. DprE1 is a highly vulnerable and fully validated tuberculosis drug target. This Mycobacterium tuberculosis (strain CDC 1551 / Oshkosh) protein is Decaprenylphosphoryl-beta-D-ribose oxidase.